Here is a 360-residue protein sequence, read N- to C-terminus: Isopentenyl-diphosphate delta-isomerase (360 aa).

A substrate-binding site is contributed by 6-7 (RK). FMN-binding positions include T62, 63–65 (GMT), S93, and N122. 93–95 (SQR) is a substrate binding site. Q157 provides a ligand contact to substrate. Position 158 (E158) interacts with Mg(2+). FMN contacts are provided by residues K189, S214, T219, 272–274 (GIR), and 293–294 (AL).

This sequence belongs to the IPP isomerase type 2 family. As to quaternary structure, homooctamer. Dimer of tetramers. Requires FMN as cofactor. The cofactor is NADPH. Mg(2+) serves as cofactor.

The protein resides in the cytoplasm. It catalyses the reaction isopentenyl diphosphate = dimethylallyl diphosphate. Its function is as follows. Involved in the biosynthesis of isoprenoids. Catalyzes the 1,3-allylic rearrangement of the homoallylic substrate isopentenyl (IPP) to its allylic isomer, dimethylallyl diphosphate (DMAPP). In Ignicoccus hospitalis (strain KIN4/I / DSM 18386 / JCM 14125), this protein is Isopentenyl-diphosphate delta-isomerase.